The chain runs to 177 residues: Adenine phosphoribosyltransferase (177 aa).

Belongs to the purine/pyrimidine phosphoribosyltransferase family. In terms of assembly, homodimer.

It is found in the cytoplasm. It catalyses the reaction AMP + diphosphate = 5-phospho-alpha-D-ribose 1-diphosphate + adenine. It functions in the pathway purine metabolism; AMP biosynthesis via salvage pathway; AMP from adenine: step 1/1. In terms of biological role, catalyzes a salvage reaction resulting in the formation of AMP, that is energically less costly than de novo synthesis. This chain is Adenine phosphoribosyltransferase, found in Leuconostoc citreum (strain KM20).